A 604-amino-acid chain; its full sequence is MIRQCLSRRGAYSRYRLAARGVELAEPFHHQSSRPQGRRNWSSSPRCSLDIRTDTPRSRSEYVPLRKQLKEEAKAKRAAKRKGSAPPAKHDDWELTVGIEIHAQLDTDAKLFSRASAAIDDIPNSNVALFDIALPGSQPLFQPSTLIPALRAALAMNCDIQRVSRFDRKHYFYQDQPAGYQITQYYEPYAKNGSIWLQEHDGIAREDGEGVQIGIKQIQMEQDTAKSQELPSSTYLLDFNRVSRPLIEIITLPQIHSPATAAACVRKIQAILQSVGAVTTGMEMGGLRADVNVSVRKRSEEAGDHEYHGIVGLGQRTEIKNLSSFKAVEDAIIAERDRQIAVLEAGGTIEGETRGWTLGSTETRKLRGKEGEVDYRYMPDPDLGPVVIGEDVICDLQMKMPLLPDALFQMLVRNPKYKLSTADAKTMIELDDGQRLEYYQDVVDILIGLQTDLSADFSGGKAVGNWVLHELGGLLTKSSLPWDSGRVPAQSLAEIIDLLSRKEITSSSAKSLLAMVFDGDKRSVAQIVEDENLRFQSLSRGEYIALAEEVMRQNPKMVSEIREKGQLGKIGWFVGQIKRIGDANRVEAQKAEEILRELILKKNS.

The N-terminal 48 residues, 1-48 (MIRQCLSRRGAYSRYRLAARGVELAEPFHHQSSRPQGRRNWSSSPRCS), are a transit peptide targeting the mitochondrion. The interval 28–57 (FHHQSSRPQGRRNWSSSPRCSLDIRTDTPR) is disordered. Over residues 33 to 46 (SRPQGRRNWSSSPR) the composition is skewed to polar residues.

The protein belongs to the GatB/GatE family. GatB subfamily. In terms of assembly, subunit of the heterotrimeric GatCAB amidotransferase (AdT) complex, composed of A, B and C subunits.

The protein resides in the mitochondrion. It carries out the reaction L-glutamyl-tRNA(Gln) + L-glutamine + ATP + H2O = L-glutaminyl-tRNA(Gln) + L-glutamate + ADP + phosphate + H(+). Its function is as follows. Allows the formation of correctly charged Gln-tRNA(Gln) through the transamidation of misacylated Glu-tRNA(Gln) in the mitochondria. The reaction takes place in the presence of glutamine and ATP through an activated gamma-phospho-Glu-tRNA(Gln). This Ajellomyces dermatitidis (strain ER-3 / ATCC MYA-2586) (Blastomyces dermatitidis) protein is Glutamyl-tRNA(Gln) amidotransferase subunit B, mitochondrial.